An 83-amino-acid chain; its full sequence is Kunitz-type serine protease inhibitor (83 aa).

The first 25 residues, 1–25 (MSSGRLLLLLGLLTLWAELTPVSGL), serve as a signal peptide directing secretion. Residues 31-81 (CELPPEPGLCNARKTFFYYSLHSHACQKFIYGGCGGNANKFKTIDECHRTC) form the BPTI/Kunitz inhibitor domain. 3 cysteine pairs are disulfide-bonded: Cys-31–Cys-81, Cys-40–Cys-64, and Cys-56–Cys-77.

As to expression, expressed by the venom gland.

It localises to the secreted. Its function is as follows. Serine protease inhibitor that inhibits chymotrypsin (Ki=3520 nM). This chain is Kunitz-type serine protease inhibitor, found in Ophiophagus hannah (King cobra).